The chain runs to 333 residues: MTSSIPAIVYTNGTAAISRELTLAKRERDELRREVETLNLELSAQVDKNRALEETLGTRDAEISRLSKLVDSPRDSLIRMYITKNQTLAQRVKTLEHRLARETKKGSRAGPVATGTGVYGPGPYPRVPIPVADYPIMYSRVGFPEYVLTMYAAYGKCQKNILDTYVRGGVVTPEFYTVLFSASAIFPVGWFDRQFSVSTGHDLDYFCWKLVALRVTTQYLTLLNTFSDSAQLALKTHVNQRQLFQTTQFLRVQQQQFVDLVNIRSAELGEVYTSAPPLDEYTKKRANLIAEAGDEDLDKLLILADDPIIRVPAEKNRKRRAIGGSEELTACVE.

This is an uncharacterized protein from Ictalurid herpesvirus 1 (strain Auburn) (IcHV-1).